A 570-amino-acid chain; its full sequence is Periplasmic trehalase (570 aa).

A signal peptide spans 1 to 34; the sequence is MIPPEIRRSVLLQKAIKLALAGTLLTFASFSATA. Residues R159, 166–167, N203, 212–214, 284–286, and G317 contribute to the substrate site; these read WD, RSQ, and RPE. Active-site proton donor/acceptor residues include D319 and E503. E518 lines the substrate pocket. Residues 544–570 form a disordered region; it reads KPCDSVPSTRPASLSATPTKTPSAATQ. The segment covering 554-570 has biased composition (low complexity); that stretch reads PASLSATPTKTPSAATQ.

It belongs to the glycosyl hydrolase 37 family. As to quaternary structure, monomer.

The protein localises to the periplasm. The catalysed reaction is alpha,alpha-trehalose + H2O = alpha-D-glucose + beta-D-glucose. In terms of biological role, provides the cells with the ability to utilize trehalose at high osmolarity by splitting it into glucose molecules that can subsequently be taken up by the phosphotransferase-mediated uptake system. This is Periplasmic trehalase from Salmonella choleraesuis (strain SC-B67).